The following is a 354-amino-acid chain: S-adenosylmethionine:tRNA ribosyltransferase-isomerase (354 aa).

It belongs to the QueA family. Monomer.

Its subcellular location is the cytoplasm. The enzyme catalyses 7-aminomethyl-7-carbaguanosine(34) in tRNA + S-adenosyl-L-methionine = epoxyqueuosine(34) in tRNA + adenine + L-methionine + 2 H(+). The protein operates within tRNA modification; tRNA-queuosine biosynthesis. Transfers and isomerizes the ribose moiety from AdoMet to the 7-aminomethyl group of 7-deazaguanine (preQ1-tRNA) to give epoxyqueuosine (oQ-tRNA). In Methylobacterium radiotolerans (strain ATCC 27329 / DSM 1819 / JCM 2831 / NBRC 15690 / NCIMB 10815 / 0-1), this protein is S-adenosylmethionine:tRNA ribosyltransferase-isomerase.